A 197-amino-acid chain; its full sequence is Tic20 family protein Ycf60 (197 aa).

5 consecutive transmembrane segments (helical) span residues 3–23, 47–66, 81–101, 118–138, and 141–161; these read IIIASYGVLIIVLAIGIGVGV, FGYYLLPVLECMTHCGPDVL, LVVVYSTYPILGFMIFFMSYF, VSQALIIYLLTSIIGSLLNAL, and MILMGWFGSTCLDILFILTMG.

This sequence belongs to the Tic20 family.

It localises to the plastid. It is found in the chloroplast membrane. The protein is Tic20 family protein Ycf60 (ycf60) of Cyanidioschyzon merolae (strain NIES-3377 / 10D) (Unicellular red alga).